The sequence spans 613 residues: Zinc metalloproteinase-disintegrin-like atragin (613 aa).

An N-terminal signal peptide occupies residues 1 to 20; the sequence is MIQALLVIICLAVFPHQGSS. A propeptide spanning residues 21–191 is cleaved from the precursor; sequence IILESGNVND…DESIEKTSQL (171 aa). The Peptidase M12B domain maps to 205–400; that stretch reads KYIEFYVVVD…DRPQCILNKP (196 aa). Residues glutamate 208 and aspartate 292 each contribute to the Ca(2+) site. 2 cysteine pairs are disulfide-bonded: cysteine 316–cysteine 395 and cysteine 356–cysteine 379. 3 residues coordinate Zn(2+): histidine 341, histidine 345, and histidine 351. Positions 395, 398, 410, 413, 415, 417, 420, and 423 each coordinate Ca(2+). A Disintegrin domain is found at 408–494; the sequence is PPICGNYFVE…ECPTDVFQRN (87 aa). Intrachain disulfides connect cysteine 411-cysteine 440, cysteine 422-cysteine 435, cysteine 424-cysteine 430, cysteine 434-cysteine 457, cysteine 448-cysteine 454, cysteine 453-cysteine 479, cysteine 466-cysteine 486, cysteine 473-cysteine 505, cysteine 498-cysteine 510, cysteine 517-cysteine 567, cysteine 532-cysteine 575, cysteine 542-cysteine 577, cysteine 545-cysteine 555, cysteine 562-cysteine 601, and cysteine 595-cysteine 606. Asparagine 436 is a glycosylation site (N-linked (GlcNAc...) asparagine). Residues 472 to 474 carry the D/ECD-tripeptide motif; the sequence is DCD. Ca(2+)-binding residues include aspartate 474, leucine 475, glutamate 477, aspartate 489, and valine 490. The interval 560–574 is hypervariable region that may play important roles toward cell migration; it reads VKCGRLFCKRRNSMI.

This sequence belongs to the venom metalloproteinase (M12B) family. P-III subfamily. P-IIIa sub-subfamily. Monomer. The cofactor is Zn(2+). As to expression, expressed by the venom gland.

The protein resides in the secreted. Functionally, snake venom zinc metalloproteinase that seems to inhibit cell migration. This activity is dominated by the local structure of the hyper-variable region. The chain is Zinc metalloproteinase-disintegrin-like atragin from Naja atra (Chinese cobra).